Consider the following 433-residue polypeptide: MLFEQGQLTLELPECTMQKAAYYENPGLFGGYGYSKATDTYGYSTPHQPYPPPAAANSLDSDYPSSACSIQSSAPLRAPAHKGAELNGSCMRPGTGNSQGGGGGNQPPGLNSEQQPPQPPPPPPPTLPPSSPTNPGSGVPAKKTKGGLSASSSSSTISKQIFPWMKESRQNSKQKNSCATSGENCEDKSPPGPASKRVRTAYTSAQLVELEKEFHFNRYLCRPRRVEMANLLNLTERQIKIWFQNRRMKYKKDQKAKGILHSPAGQSPERSPPLGGAAGHVAYSGQLPPVPGLAYDAPSPPAFAKSQPNMYGLAAYTAPLSSCLPQQKRYPAPEFEPHPMASNGGGFASANLQGSPVYVGGNFVDSMAPTSGPVFNLGHLSHPSSASVDYSCAAQIPGNHHHGPCDPHPTYTDLSAHHSSQGRLPEAPKLTHL.

Disordered stretches follow at residues 44 to 198 (STPH…SKRV), 258 to 280 (GILHSPAGQSPERSPPLGGAAGH), and 401 to 433 (HHGPCDPHPTYTDLSAHHSSQGRLPEAPKLTHL). Over residues 58-74 (SLDSDYPSSACSIQSSA) the composition is skewed to polar residues. The segment covering 97–106 (NSQGGGGGNQ) has biased composition (gly residues). Over residues 116-132 (PPQPPPPPPPTLPPSSP) the composition is skewed to pro residues. Over residues 146–159 (GGLSASSSSSTISK) the composition is skewed to low complexity. An Antp-type hexapeptide motif is present at residues 161-166 (IFPWMK). Residues 171–183 (NSKQKNSCATSGE) are compositionally biased toward polar residues. A DNA-binding region (homeobox) is located at residues 195–254 (SKRVRTAYTSAQLVELEKEFHFNRYLCRPRRVEMANLLNLTERQIKIWFQNRRMKYKKDQ).

The protein belongs to the Antp homeobox family. Detected in adult kidney, but not in other adult tissues tested.

It is found in the nucleus. In terms of biological role, sequence-specific transcription factor which is part of a developmental regulatory system that provides cells with specific positional identities on the anterior-posterior axis. This chain is Homeobox protein Hox-D3 (Hoxd3), found in Mus musculus (Mouse).